We begin with the raw amino-acid sequence, 392 residues long: MLLMLTQWLQGLSPELSFLRVFQYLTLRAVMAALTALLIGLIAGPKVIRMLTSLKIGQPIRGYAMQTHLSKSGTPTMGGVLILGSIAISTLLWFDLSNRFVWIVLAVTLGFGAIGWVDDWRKVVNKDPEGMRSREKYFWQSVIGLLAALYLVFSISENSNTRVFELFITWVQSGFLMDLPPKAGLLVPFFKEVSYPLGVLGFVILTYLVIVGSSNAVNLTDGLDGLAIMPVIMVGASLGIFAYVTGNAGYAKYLLFPYIAGSGELLIFCAAMAGAGLAFLWFNTHPAQVFMGDVGALALGAALGTIAVIVRQEIVLAIMGGIFVVEALSVMLQVTWFKYTKRKYGEGRRLLKMAPLHHHFEKSGWKETQVVVRFWIITMLLCLVGLTTLKLR.

11 helical membrane passes run 24–44, 76–96, 100–120, 137–157, 167–187, 193–213, 225–245, 262–282, 289–309, 314–334, and 369–389; these read YLTL…LIAG, TMGG…WFDL, FVWI…VDDW, YFWQ…SISE, FITW…GLLV, VSYP…IVGS, GLAI…AYVT, SGEL…FLWF, VFMG…IAVI, IVLA…MLQV, and QVVV…LTTL.

It belongs to the glycosyltransferase 4 family. MraY subfamily. Mg(2+) serves as cofactor.

It localises to the cell inner membrane. The enzyme catalyses UDP-N-acetyl-alpha-D-muramoyl-L-alanyl-gamma-D-glutamyl-meso-2,6-diaminopimeloyl-D-alanyl-D-alanine + di-trans,octa-cis-undecaprenyl phosphate = di-trans,octa-cis-undecaprenyl diphospho-N-acetyl-alpha-D-muramoyl-L-alanyl-D-glutamyl-meso-2,6-diaminopimeloyl-D-alanyl-D-alanine + UMP. Its pathway is cell wall biogenesis; peptidoglycan biosynthesis. Functionally, catalyzes the initial step of the lipid cycle reactions in the biosynthesis of the cell wall peptidoglycan: transfers peptidoglycan precursor phospho-MurNAc-pentapeptide from UDP-MurNAc-pentapeptide onto the lipid carrier undecaprenyl phosphate, yielding undecaprenyl-pyrophosphoryl-MurNAc-pentapeptide, known as lipid I. This chain is Phospho-N-acetylmuramoyl-pentapeptide-transferase, found in Acidovorax ebreus (strain TPSY) (Diaphorobacter sp. (strain TPSY)).